We begin with the raw amino-acid sequence, 611 residues long: Brain-enriched guanylate kinase-associated protein (611 aa).

Tyr156 bears the Phosphotyrosine mark. Ser219, Ser248, and Ser265 each carry phosphoserine. Position 268 is a phosphothreonine (Thr268). 3 positions are modified to phosphoserine: Ser284, Ser364, and Ser391. An Asymmetric dimethylarginine modification is found at Arg399. 7 positions are modified to phosphoserine: Ser474, Ser484, Ser494, Ser496, Ser519, Ser521, and Ser525. Residues 520–611 are disordered; it reads LSPSRSADPL…KAQLYGTLLN (92 aa). A compositionally biased stretch (basic and acidic residues) spans 554–563; sequence EPEHGSRDSL. A phosphoserine mark is found at Ser571 and Ser581.

As to quaternary structure, interacts with DLG4 and DLGAP1 and forms a ternary complex. Brain-specific. Expressed in neurons and rather enriched at synaptic junctions.

It localises to the cytoplasm. Its subcellular location is the membrane. In terms of biological role, may sustain the structure of the postsynaptic density (PSD). This chain is Brain-enriched guanylate kinase-associated protein (Begain), found in Rattus norvegicus (Rat).